Here is a 92-residue protein sequence, read N- to C-terminus: Small ribosomal subunit protein uS19 (92 aa).

This sequence belongs to the universal ribosomal protein uS19 family.

In terms of biological role, protein S19 forms a complex with S13 that binds strongly to the 16S ribosomal RNA. This chain is Small ribosomal subunit protein uS19, found in Wigglesworthia glossinidia brevipalpis.